The following is a 416-amino-acid chain: Adenylosuccinate synthetase (416 aa).

GTP-binding positions include 13–19 and 41–43; these read GDEGKGK and GHT. Asp-14 acts as the Proton acceptor in catalysis. 2 residues coordinate Mg(2+): Asp-14 and Gly-41. Residues 14–17, 39–42, Thr-126, Arg-140, Gln-220, Thr-235, and Arg-299 contribute to the IMP site; these read DEGK and NAGH. Residue His-42 is the Proton donor of the active site. 295–301 lines the substrate pocket; it reads TTTGRPR. Residues Arg-301, 327–329, and 405–407 contribute to the GTP site; these read KLD and STS.

The protein belongs to the adenylosuccinate synthetase family. In terms of assembly, homodimer. Mg(2+) is required as a cofactor.

The protein resides in the cytoplasm. The catalysed reaction is IMP + L-aspartate + GTP = N(6)-(1,2-dicarboxyethyl)-AMP + GDP + phosphate + 2 H(+). It functions in the pathway purine metabolism; AMP biosynthesis via de novo pathway; AMP from IMP: step 1/2. Functionally, plays an important role in the de novo pathway of purine nucleotide biosynthesis. Catalyzes the first committed step in the biosynthesis of AMP from IMP. In Sulfurovum sp. (strain NBC37-1), this protein is Adenylosuccinate synthetase.